An 807-amino-acid chain; its full sequence is Glycerol-3-phosphate acyltransferase (807 aa).

Residues 308–313 carry the HXXXXD motif motif; that stretch reads CHRSHM.

Belongs to the GPAT/DAPAT family.

The protein resides in the cell inner membrane. The enzyme catalyses sn-glycerol 3-phosphate + an acyl-CoA = a 1-acyl-sn-glycero-3-phosphate + CoA. The protein operates within phospholipid metabolism; CDP-diacylglycerol biosynthesis; CDP-diacylglycerol from sn-glycerol 3-phosphate: step 1/3. This chain is Glycerol-3-phosphate acyltransferase, found in Shewanella woodyi (strain ATCC 51908 / MS32).